We begin with the raw amino-acid sequence, 447 residues long: Glycogen synthase (447 aa).

An ADP-alpha-D-glucose-binding site is contributed by Arg15.

It belongs to the glycosyltransferase 1 family. Bacterial/plant glycogen synthase subfamily.

It carries out the reaction [(1-&gt;4)-alpha-D-glucosyl](n) + ADP-alpha-D-glucose = [(1-&gt;4)-alpha-D-glucosyl](n+1) + ADP + H(+). It functions in the pathway glycan biosynthesis; glycogen biosynthesis. In terms of biological role, synthesizes alpha-1,4-glucan chains using ADP-glucose. The chain is Glycogen synthase from Deinococcus geothermalis (strain DSM 11300 / CIP 105573 / AG-3a).